The sequence spans 700 residues: Calpain-2 catalytic subunit (700 aa).

At alanine 2 the chain carries N-acetylalanine. Residues 2-19 constitute a propeptide, anchors to the small subunit; it reads AGIAAKLAKDREAAEGLG. One can recognise a Calpain catalytic domain in the interval 45 to 344; sequence LFQDPSFPAL…YSRLEICNLT (300 aa). Glycine 91 and aspartate 96 together coordinate Ca(2+). The active site involves cysteine 105. Residues glutamate 175, glutamine 229, and lysine 230 each contribute to the Ca(2+) site. Catalysis depends on residues histidine 262 and asparagine 286. Glutamate 292, aspartate 299, and glutamate 323 together coordinate Ca(2+). Residues 345-514 form a domain III region; it reads PDTLTSDSYK…KKADYQVVDD (170 aa). The tract at residues 515–529 is linker; the sequence is EIEANIDEIDISEDD. Residues 530–700 are domain IV; that stretch reads IDDGFRRLFA…LISWLSFSVL (171 aa). Positions 542, 545, 547, 552, 585, 587, 589, 591, 596, 615, 617, 619, 621, 626, 658, and 661 each coordinate Ca(2+). 3 EF-hand domains span residues 572–597, 602–637, and 652–672; these read FSIETCKIMVDMLDSDGSGKLGLKEF, TKIQKYQKIYREIDVDRSGTMNSYEMRKALEEAGFK, and DDDLIIDFDNFVRCLIRLETL.

It belongs to the peptidase C2 family. Forms a heterodimer with a small (regulatory) subunit (CAPNS1). Interacts with CPEB3; this leads to cleavage of CPEB3. It depends on Ca(2+) as a cofactor. In terms of tissue distribution, ubiquitous.

The protein localises to the cytoplasm. It localises to the cell membrane. It catalyses the reaction Broad endopeptidase specificity.. Its activity is regulated as follows. Activated by 200-1000 micromolar concentrations of calcium and inhibited by calpastatin. Calcium-regulated non-lysosomal thiol-protease which catalyzes limited proteolysis of substrates involved in cytoskeletal remodeling and signal transduction. Proteolytically cleaves MYOC at 'Arg-226'. Proteolytically cleaves CPEB3 following neuronal stimulation which abolishes CPEB3 translational repressor activity, leading to translation of CPEB3 target mRNAs. This Bos taurus (Bovine) protein is Calpain-2 catalytic subunit (CAPN2).